Reading from the N-terminus, the 742-residue chain is Two pore calcium channel protein 1 (742 aa).

A disordered region spans residues 1 to 44; the sequence is MSEAQAPLITEEAAERGLASSGSRRLSDGGGGQGSRKYRRRSDA. Topologically, residues 1-82 are cytoplasmic; the sequence is MSEAQAPLIT…NDTRFGRAMS (82 aa). Residues 83–103 traverse the membrane as a helical segment; that stretch reads FYFVYLRLDWLWSLNIFALIL. Residues 104–140 lie on the Extracellular side of the membrane; the sequence is LNFLEKPLWCRKDALHACDQRDMYFLGQLPYFSKTES. A helical membrane pass occupies residues 141 to 161; it reads LIYEGLTLVILVMEILCPLSY. Residues 162–176 are Cytoplasmic-facing; sequence EGLNIFWRSTTNKLK. Residues 177–197 form a helical membrane-spanning segment; sequence ILLLFILACDILVFAFSSQPF. The Extracellular portion of the chain corresponds to 198–204; the sequence is RLAPYIR. A helical; Voltage-sensor transmembrane segment spans residues 205–226; the sequence is VVFLIMTIRELRMCAITLAGLI. Residues 227 to 247 form a helical membrane-spanning segment; it reads GTYLNVLALSLLFLLFASWLA. Over 248–258 the chain is Extracellular; sequence YVTFEDTPQGK. Residues 259 to 273 constitute an intramembrane region (pore-forming); that stretch reads TIFSSYGVTLYQMFV. The Extracellular segment spans residues 274–296; that stretch reads LFTTSNNPDVWVPAYKISRWYSL. Residues 297 to 317 form a helical membrane-spanning segment; it reads FFIVYVLLGVYFLTNLILAVI. Topologically, residues 318–446 are cytoplasmic; the sequence is YDSFKEQFAK…SFVRSRTFEY (129 aa). 2 consecutive EF-hand domains span residues 335-370 and 376-411; these read IRKNILQKAFELIDTNTRGYLDREQCISLLNELNKY and TSREDFELIFAELDRSGDFKVTSEEFADLCNTIAIK. A helical transmembrane segment spans residues 447-467; it reads IIVFVLLINLVAVIIETTLDI. Topologically, residues 468-480 are extracellular; that stretch reads ENSSSQETWQEVE. N-linked (GlcNAc...) asparagine glycosylation occurs at asparagine 469. The chain crosses the membrane as a helical span at residues 481–501; it reads FFLGWIYVAEMALKIFSLGFG. Residues 502–510 are Cytoplasmic-facing; the sequence is AYWMEGQNK. Residues 511-531 form a helical membrane-spanning segment; sequence FDFVLTWTIFIGETLTFAFPS. Residues 532–540 are Extracellular-facing; sequence KLPFLSNGE. A helical; Voltage-sensor transmembrane segment spans residues 541–558; that stretch reads WIRYLLLGRVLRLTRILL. Residues 559 to 582 are Cytoplasmic-facing; it reads QVQRFRVFVATFFTLMSSLMPYLG. The helical transmembrane segment at 583–603 threads the bilayer; the sequence is IVFCILCMYCSLGLQIFGGIV. Over 604 to 627 the chain is Extracellular; the sequence is YAGNPTLEETDLFSNDYLLFNFND. An intramembrane region (pore-forming) is located at residues 628–642; sequence YPSGMVTLFNLLVMG. Residues 643–663 lie on the Extracellular side of the membrane; that stretch reads NWQVWMESYWQLTGSSWSLIY. Residues 664 to 684 form a helical membrane-spanning segment; it reads FVSFYLISILLLLNLIVAFVL. Over 685–742 the chain is Cytoplasmic; the sequence is EAFFAEMELEKGEEVDIQSPTSGGIKKRRSMRVRSKGTMVDILLHHMLSNELDGSQNS.

The protein belongs to the calcium channel alpha-1 subunit (TC 1.A.1.11) family. Two pore calcium channel subfamily. As to quaternary structure, homodimer.

It localises to the membrane. With respect to regulation, inhibited by Al(3+). In terms of biological role, functions as a voltage-gated inward-rectifying Ca(2+) channel (VDCC) across the plasma membrane that mediates sucrose-induced Ca(2+) influx in autotrophically grown leaf cells. Acts as the major ROS-responsive Ca(2+) channel and is the possible target of Al-dependent inhibition. Plays a regulatory role in defense responses. This Hordeum vulgare (Barley) protein is Two pore calcium channel protein 1 (TPC1).